Here is a 94-residue protein sequence, read N- to C-terminus: Aspartyl/glutamyl-tRNA(Asn/Gln) amidotransferase subunit C (94 aa).

Belongs to the GatC family. As to quaternary structure, heterotrimer of A, B and C subunits.

The catalysed reaction is L-glutamyl-tRNA(Gln) + L-glutamine + ATP + H2O = L-glutaminyl-tRNA(Gln) + L-glutamate + ADP + phosphate + H(+). It catalyses the reaction L-aspartyl-tRNA(Asn) + L-glutamine + ATP + H2O = L-asparaginyl-tRNA(Asn) + L-glutamate + ADP + phosphate + 2 H(+). Functionally, allows the formation of correctly charged Asn-tRNA(Asn) or Gln-tRNA(Gln) through the transamidation of misacylated Asp-tRNA(Asn) or Glu-tRNA(Gln) in organisms which lack either or both of asparaginyl-tRNA or glutaminyl-tRNA synthetases. The reaction takes place in the presence of glutamine and ATP through an activated phospho-Asp-tRNA(Asn) or phospho-Glu-tRNA(Gln). The chain is Aspartyl/glutamyl-tRNA(Asn/Gln) amidotransferase subunit C from Caldicellulosiruptor bescii (strain ATCC BAA-1888 / DSM 6725 / KCTC 15123 / Z-1320) (Anaerocellum thermophilum).